Consider the following 83-residue polypeptide: Gas vesicle protein G2 (83 aa).

The protein belongs to the gas vesicle GvpG family. In terms of assembly, gvpF to GvpM interact with each other in vitro, and may form multi-subunit complex(es).

Its subcellular location is the gas vesicle. In terms of biological role, proteins GvpF to GvpM might be involved in nucleating gas vesicle formation. A minor component of the gas vesicle. Gas vesicles are hollow, gas filled proteinaceous nanostructures found in several microbial planktonic microorganisms. They allow positioning of halobacteria at the optimal depth for growth in the poorly aerated, shallow brine pools of their habitat. Functionally, expression of 2 c-vac DNA fragments containing 2 divergently transcribed regions (gvpE-gvpF-gvpG-gvpH-gvpI-gvpJ-gvpK-gvpL-gvpM and gvpA-gvpC-gvpN-gvpO) allows H.volcanii to produce gas vesicles. The polypeptide is Gas vesicle protein G2 (Halobacterium salinarum (strain ATCC 700922 / JCM 11081 / NRC-1) (Halobacterium halobium)).